The primary structure comprises 526 residues: Arginine/ornithine antiporter ArcD1 (526 aa).

Transmembrane regions (helical) follow at residues 8–28, 41–61, 88–108, 128–148, 160–180, 220–240, 255–275, 297–317, 354–374, 378–398, 407–427, 428–448, 466–486, and 495–515; these read GIGL…GGVF, GGVV…VLSL, FISG…FAVL, LTIL…LLVM, IVLV…IVTF, VKGS…AAMM, IFGL…PFGF, VGGW…LGAW, LLLT…VADA, FVYL…LYLF, TSNI…LYYS, GWQF…LYAL, FILT…WLGL, and NTLL…YFVV.

Belongs to the amino acid-polyamine-organocation (APC) superfamily. Basic amino acid/polyamine antiporter (APA) (TC 2.A.3.2) family.

The protein localises to the cell membrane. The enzyme catalyses L-ornithine(in) + L-arginine(out) = L-ornithine(out) + L-arginine(in). Its function is as follows. Catalyzes electroneutral exchange between L-arginine and L-ornithine. Can also efficiently translocate L-histidine and L-lysine. ArcD1 is the main L-arginine/L-ornithine exchanger in the arginine deiminase (ADI) pathway. This Lactococcus lactis subsp. cremoris (strain MG1363) protein is Arginine/ornithine antiporter ArcD1.